Reading from the N-terminus, the 300-residue chain is Acyl-CoA-binding domain-containing protein 6 (300 aa).

Residues 1 to 19 (MASRSPSSSPDSATGSGTD) show a composition bias toward low complexity. A disordered region spans residues 1-43 (MASRSPSSSPDSATGSGTDPARPDTGEPLGGGSDSDSDFGLGK). Residues 60 to 145 (LENEFESAAD…VHALDPEGSQ (86 aa)) form the ACB domain. An acyl-CoA contacts are provided by residues 87 to 91 (YARFK), lysine 113, and tyrosine 132. The disordered stretch occupies residues 142 to 162 (EGSQKSSERRGGEKRTGFGGP). The segment covering 147–157 (SSERRGGEKRT) has biased composition (basic and acidic residues). ANK repeat units lie at residues 209-238 (EGRA…DINS) and 242-271 (EGQT…DPSI). Residues 270–300 (SIKDQEGSLPEEVTESSAISSLLRQYTAPKG) are disordered. The span at 284–293 (ESSAISSLLR) shows a compositional bias: polar residues.

In terms of tissue distribution, higly expressed in the central nervous system, developing eyes, otic vesicle, and trunk muscles.

The protein localises to the cytoplasm. The protein resides in the nucleus. Binds long-chain acyl-coenzyme A molecules with a strong preference for unsaturated C18:1-CoA. Does not bind fatty acids. Plays a role in protein N-myristoylation. This Danio rerio (Zebrafish) protein is Acyl-CoA-binding domain-containing protein 6 (acbd6).